Reading from the N-terminus, the 323-residue chain is tRNA U34 carboxymethyltransferase (323 aa).

Carboxy-S-adenosyl-L-methionine-binding positions include K91, W105, K110, G130, 181–182, M196, Y200, and R315; that span reads IE.

Belongs to the class I-like SAM-binding methyltransferase superfamily. CmoB family. As to quaternary structure, homotetramer.

The enzyme catalyses carboxy-S-adenosyl-L-methionine + 5-hydroxyuridine(34) in tRNA = 5-carboxymethoxyuridine(34) in tRNA + S-adenosyl-L-homocysteine + H(+). Its function is as follows. Catalyzes carboxymethyl transfer from carboxy-S-adenosyl-L-methionine (Cx-SAM) to 5-hydroxyuridine (ho5U) to form 5-carboxymethoxyuridine (cmo5U) at position 34 in tRNAs. This is tRNA U34 carboxymethyltransferase from Sodalis glossinidius (strain morsitans).